A 946-amino-acid polypeptide reads, in one-letter code: Zinc finger protein rotund (946 aa).

Disordered stretches follow at residues 10 to 30 (GPQL…GHSD) and 156 to 269 (FRKP…HNLN). Polar residues predominate over residues 161–176 (NNNGYSWSTGNNNEVV). Over residues 177 to 188 (SHSSNGHTNNHP) the composition is skewed to low complexity. Composition is skewed to polar residues over residues 198–230 (ASAT…SIKS) and 242–269 (TCKS…HNLN). 6 consecutive C2H2-type zinc fingers follow at residues 488 to 510 (YQCK…TQIH), 517 to 539 (YKCT…TRIH), 545 to 567 (YRCE…IRTH), 573 to 597 (YKCR…SRCH), 603 to 625 (FKCN…IPKH), and 634 to 656 (HICQ…MQKH). Residues 683–853 (GGSANPANGP…TPSAVGPYDA (171 aa)) are disordered. 2 stretches are compositionally biased toward low complexity: residues 739-762 (HQQQ…QQQQ) and 770-790 (HGVP…QQQQ). Residues 813–822 (TAPNGSQSNG) show a composition bias toward polar residues. Residues 828-841 (QPHHRMPDPVREDI) are compositionally biased toward basic and acidic residues.

This sequence belongs to the krueppel C2H2-type zinc-finger protein family. Interacts with nab; which acts as a corepressor. In terms of tissue distribution, isoform rn and isoform roe are expressed in non-overlapping domains in the larval imaginal disks. Isoform rn is first expressed during the early third larval instar in the leg, wing, haltere and antennal part of the eye-antennal imaginal disk. It is observed as a ring in the leg and antenna disks and in the presumptive wing pouch and capitellum of wing and haltere disks respectively. In wing disk it is expressed in 3 concentric domains in the wing pouch. In late third instar, expression of isoform rn in the leg disk is no longer evident, but is maintained in the other disks. Isoform roe appears in the third instar and is confined to the eye part of the eye-antennal imaginal disk in a band of 4-6 cells at the morphogenetic furrow. There is no evidence of roe expression in other imaginal disks.

The protein resides in the nucleus. In terms of biological role, transcription factor involved in imaginal disks development. Isoform rn is required in the wings, antenna, haltere, proboscis and legs disks, while isoform roe is required in the eye disk. Together with nab corepressor, it is involved in the initiation and maintenance of wingless (wg) expression in the wing hinge, by limiting the expression of wg to this compartment. Also required for the epithelial-mesenchymal transition branch of basolateral junctions signaling. The sequence is that of Zinc finger protein rotund from Drosophila melanogaster (Fruit fly).